Consider the following 372-residue polypeptide: Neuropeptide S receptor (372 aa).

Residues 1–52 (MPANLTEGSFHANQTVPMLDSSPVACTEIVTFTEALEAEEWGSFYSSFKTEQ) lie on the Extracellular side of the membrane. 2 N-linked (GlcNAc...) asparagine glycosylation sites follow: asparagine 4 and asparagine 13. The helical transmembrane segment at 53–73 (LITLWVLFVFTIVGNSVVLFS) threads the bilayer. At 74 to 82 (TWRRKRKSR) the chain is on the cytoplasmic side. A helical membrane pass occupies residues 83–103 (MTFFVTQLAITDSFTGLINIL). Residues 104–122 (TDIIWRFTGDFMAPDLVCR) are Extracellular-facing. Cysteine 121 and cysteine 198 are joined by a disulfide. A helical transmembrane segment spans residues 123–143 (IVRYLQVVLLYASTYVLVSLS). Topologically, residues 144–165 (IDRYHAIVYPMKFLQGAEKQAK) are cytoplasmic. A helical transmembrane segment spans residues 166–186 (VLIGIAWSLSFLFSIPTLIIF). At 187 to 213 (GKRTLSNGEVQCWALWPDDSYWTPYMT) the chain is on the extracellular side. Residues 214-234 (IVAFLVYFIPLTIISVIYGLV) form a helical membrane-spanning segment. The Cytoplasmic portion of the chain corresponds to 235 to 276 (IRTIWIKSKAHETVISNCSDGELCCSYNRGLISKAKIKAIKY). The chain crosses the membrane as a helical span at residues 277–297 (SIVIILAFICCWSPYFLFDML). Topologically, residues 298–313 (DNFNLLPDTKERFYAS) are extracellular. Residues 314–334 (VIIQNLPALNSAINPLIYCIF) traverse the membrane as a helical segment. Residues 335-372 (SGSLCSPCKVQRSQDSRMTYRERSERHEMQILSKPEFI) lie on the Cytoplasmic side of the membrane.

The protein belongs to the G-protein coupled receptor 1 family. Vasopressin/oxytocin receptor subfamily.

It localises to the cell membrane. G-protein coupled receptor for neuropeptide S (NPS). Promotes mobilization of intracellular Ca(2+) stores. Inhibits cell growth in response to NPS binding. Involved in pathogenesis of asthma and other IgE-mediated diseases. The polypeptide is Neuropeptide S receptor (Npsr1) (Rattus norvegicus (Rat)).